The primary structure comprises 394 residues: Elongation factor Tu-A (394 aa).

The 195-residue stretch at 10–204 folds into the tr-type G domain; sequence KPHVNVGTIG…ALDTYIPEPE (195 aa). The interval 19-26 is G1; the sequence is GHVDHGKT. 19–26 lines the GTP pocket; it reads GHVDHGKT. Thr26 lines the Mg(2+) pocket. A G2 region spans residues 60–64; the sequence is GITIN. Residues 81 to 84 form a G3 region; sequence DCPG. GTP-binding positions include 81 to 85 and 136 to 139; these read DCPGH and NKCD. Residues 136-139 are G4; the sequence is NKCD. Positions 174 to 176 are G5; the sequence is SAL.

The protein belongs to the TRAFAC class translation factor GTPase superfamily. Classic translation factor GTPase family. EF-Tu/EF-1A subfamily. As to quaternary structure, monomer.

It is found in the cytoplasm. It carries out the reaction GTP + H2O = GDP + phosphate + H(+). Functionally, GTP hydrolase that promotes the GTP-dependent binding of aminoacyl-tRNA to the A-site of ribosomes during protein biosynthesis. This Vibrio cholerae serotype O1 (strain ATCC 39315 / El Tor Inaba N16961) protein is Elongation factor Tu-A.